Consider the following 373-residue polypeptide: 3 beta-hydroxysteroid dehydrogenase/Delta 5--&gt;4-isomerase type 1 (373 aa).

Residues 10–15, Tyr-155, and Lys-159 each bind NADP(+); that span reads GAGGFL. Lys-159 (proton donor) is an active-site residue. Residues 288 to 308 form a helical membrane-spanning segment; the sequence is VALLYWLGFLLELVSFLLRPV.

This sequence belongs to the 3-beta-HSD family. High levels in adrenal gland, kidney and male liver. Low levels in female liver.

It localises to the endoplasmic reticulum membrane. Its subcellular location is the mitochondrion membrane. It catalyses the reaction a 3beta-hydroxy-Delta(5)-steroid + NAD(+) = a 3-oxo-Delta(5)-steroid + NADH + H(+). The enzyme catalyses pregnenolone + NAD(+) = pregn-5-ene-3,20-dione + NADH + H(+). It carries out the reaction 3beta-hydroxyandrost-5-en-17-one + NAD(+) = androst-5-ene-3,17-dione + NADH + H(+). The catalysed reaction is androst-5-en-3beta,17beta-diol + NAD(+) = 17beta-hydroxy-androst-5-en-3-one + NADH + H(+). It catalyses the reaction a 3beta-hydroxysteroid + NADP(+) = a 3-oxosteroid + NADPH + H(+). The enzyme catalyses 5alpha-androstane-3beta,17beta-diol + NADP(+) = 17beta-hydroxy-5alpha-androstan-3-one + NADPH + H(+). It carries out the reaction 3beta-hydroxy-5alpha-androstan-17-one + NADP(+) = 5alpha-androstan-3,17-dione + NADPH + H(+). The catalysed reaction is a 3-oxo-Delta(5)-steroid = a 3-oxo-Delta(4)-steroid. It catalyses the reaction pregn-5-ene-3,20-dione = progesterone. The enzyme catalyses androst-5-ene-3,17-dione = androst-4-ene-3,17-dione. It carries out the reaction 17beta-hydroxy-androst-5-en-3-one = testosterone. The catalysed reaction is 5alpha-androstane-3beta,17beta-diol + NAD(+) = 17beta-hydroxy-5alpha-androstan-3-one + NADH + H(+). It functions in the pathway steroid hormone biosynthesis. Its pathway is steroid metabolism. In terms of biological role, a bifunctional enzyme responsible for the oxidation and isomerization of 3beta-hydroxy-Delta(5)-steroid precursors to 3-oxo-Delta(4)-steroids, an essential step in steroid hormone biosynthesis. Specifically catalyzes the conversion of pregnenolone to progesterone, 17alpha-hydroxypregnenolone to 17alpha-hydroxyprogesterone, dehydroepiandrosterone (DHEA) to 4-androstenedione, and androstenediol to testosterone. Additionally, catalyzes the interconversion between 3beta-hydroxy and 3-oxo-5alpha-androstane steroids controlling the bioavalability of the active forms. Specifically converts dihydrotestosterone to its inactive form 5alpha-androstanediol, that does not bind androgen receptor/AR. Also converts androstanedione, a precursor of testosterone and estrone, to epiandrosterone. Expected to use NAD(+) as preferred electron donor for the 3-beta-hydroxy-steroid dehydrogenase activity and NADPH for the 3-ketosteroid reductase activity. In Mesocricetus auratus (Golden hamster), this protein is 3 beta-hydroxysteroid dehydrogenase/Delta 5--&gt;4-isomerase type 1 (HSD3B1).